Reading from the N-terminus, the 189-residue chain is Ion-translocating oxidoreductase complex subunit B (189 aa).

Positions 1–26 (MSAVMIAVVLLGLLALVFGAILGFAA) are hydrophobic. Residues 32–90 (EGDPLVDQVESLLPQTQCGQCGYPGCRPYAEAIAGGDQINKCPPGGTATMEKIAELMGV) form the 4Fe-4S domain. The [4Fe-4S] cluster site is built by Cys49, Cys52, Cys57, Cys73, Cys114, Cys117, Cys120, Cys124, Cys144, Cys147, Cys150, and Cys154. 4Fe-4S ferredoxin-type domains lie at 105 to 134 (KVAYIREDECIGCTKCIQACPVDAIVGAGK) and 136 to 164 (MHTVITQDCTGCDLCVEPCPVDCIDMLPV).

The protein belongs to the 4Fe4S bacterial-type ferredoxin family. RnfB subfamily. As to quaternary structure, the complex is composed of six subunits: RnfA, RnfB, RnfC, RnfD, RnfE and RnfG. [4Fe-4S] cluster serves as cofactor.

It is found in the cell inner membrane. Functionally, part of a membrane-bound complex that couples electron transfer with translocation of ions across the membrane. In Shewanella amazonensis (strain ATCC BAA-1098 / SB2B), this protein is Ion-translocating oxidoreductase complex subunit B.